The primary structure comprises 1158 residues: Nuclear receptor-interacting protein 1 (1158 aa).

Positions 1-415 (MTHGEELGSD…EESSTPTTID (415 aa)) are interaction with ZNF366. The LXXLL motif 1 signature appears at 21–25 (LEGLL). The disordered stretch occupies residues 33 to 56 (SGTAVDKKSAGHNEEDQNFNISGS). Residues 37–47 (VDKKSAGHNEE) show a composition bias toward basic and acidic residues. A repression domain 1 region spans residues 78 to 333 (MLHLKKARLL…HLNGQARTSS (256 aa)). Position 104 is a phosphoserine (serine 104). Position 111 is an N6-acetyllysine; alternate (lysine 111). Lysine 111 participates in a covalent cross-link: Glycyl lysine isopeptide (Lys-Gly) (interchain with G-Cter in SUMO2); alternate. The LXXLL motif 2 signature appears at 133–137 (LASLL). Position 158 is an N6-acetyllysine (lysine 158). Lysine 170 participates in a covalent cross-link: Glycyl lysine isopeptide (Lys-Gly) (interchain with G-Cter in SUMO2). The short motif at 185–189 (LKTLL) is the LXXLL motif 3 element. Glycyl lysine isopeptide (Lys-Gly) (interchain with G-Cter in SUMO2) cross-links involve residues lysine 195 and lysine 198. Threonine 207 carries the post-translational modification Phosphothreonine. Serine 218 is subject to Phosphoserine. Residues 266–270 (LALLL) carry the LXXLL motif 4 motif. Lysine 286 and lysine 310 each carry N6-acetyllysine. Serine 356 is subject to Phosphoserine. A Glycyl lysine isopeptide (Lys-Gly) (interchain with G-Cter in SUMO2) cross-link involves residue lysine 372. A Phosphoserine modification is found at serine 378. Residues 380–384 (LLHLL) carry the LXXLL motif 5 motif. The segment at 393-435 (MNGHSHSERGSIFEESSTPTTIDEYSDNNPSFTDDSSGDESSY) is disordered. Over residues 406–435 (EESSTPTTIDEYSDNNPSFTDDSSGDESSY) the composition is skewed to polar residues. The tract at residues 410 to 700 (TPTTIDEYSD…PTGPEPGLSG (291 aa)) is repression domain 2. The tract at residues 431–472 (DESSYSNCVPIDLSCKHRTEKSESDQPVSLDNFTQSLLNTWD) is required for targeting to small nuclear foci. The short motif at 440 to 446 (PIDLSCK) is the CTBP-binding; principal site element. N6-acetyllysine occurs at positions 446 and 481. At serine 487 the chain carries Phosphoserine. The short motif at 500–504 (LLQLL) is the LXXLL motif 6 element. Residue lysine 508 forms a Glycyl lysine isopeptide (Lys-Gly) (interchain with G-Cter in SUMO2) linkage. Position 518 is a phosphoserine (serine 518). Lysine 528 carries the N6-acetyllysine modification. The interval 540–563 (IESPSTNRTTPVSTPPLLTSSKAG) is disordered. At serine 542 the chain carries Phosphoserine. The span at 548-560 (TTPVSTPPLLTSS) shows a compositional bias: low complexity. Phosphoserine is present on serine 564. 2 short sequence motifs (CTBP-binding) span residues 565 to 569 (PINLS) and 599 to 603 (SMDLT). Disordered regions lie at residues 592-622 (TNTA…AQNS) and 641-663 (SSMS…DKPI). A compositionally biased stretch (basic and acidic residues) spans 601–610 (DLTKSKDPPG). Residue lysine 606 is modified to N6-acetyllysine. The segment covering 641–659 (SSMSVEEQRPSKQLLTGNT) has biased composition (polar residues). Serine 671 carries the phosphoserine modification. Residues 713-717 (LQLLL) carry the LXXLL motif 7 motif. The segment at 716 to 745 (LLGNPNKGKSEKKEKTPLRDESTQEHSERA) is disordered. A compositionally biased stretch (basic and acidic residues) spans 723–745 (GKSEKKEKTPLRDESTQEHSERA). The tract at residues 735–885 (DESTQEHSER…NIVDAANNHS (151 aa)) is repression domain 3. The interaction with ZNF366 stretch occupies residues 753-1158 (VKIKSEPCDD…SVLTIKKESE (406 aa)). Residues lysine 756 and lysine 802 each participate in a glycyl lysine isopeptide (Lys-Gly) (interchain with G-Cter in SUMO2) cross-link. The residue at position 807 (serine 807) is a Phosphoserine. Positions 819-823 (LSRLL) match the LXXLL motif 8 motif. Residues lysine 850 and lysine 901 each participate in a glycyl lysine isopeptide (Lys-Gly) (interchain with G-Cter in SUMO2) cross-link. An N6-acetyllysine; alternate modification is found at lysine 931. Lysine 931 is covalently cross-linked (Glycyl lysine isopeptide (Lys-Gly) (interchain with G-Cter in SUMO2); alternate). The short motif at 936 to 940 (LKQLL) is the LXXLL motif 9 element. Residues 946 to 950 (VRDLS) carry the CTBP-binding motif. The tract at residues 950–974 (SPHRSNSVADSKKKGHKNNVTNSKP) is disordered. Serine 1001 is modified (phosphoserine). The short motif at 1061-1074 (LTKTNPILYYMLQK) is the Ligand-dependent nuclear receptor binding element. Residues lysine 1105, lysine 1115, and lysine 1154 each participate in a glycyl lysine isopeptide (Lys-Gly) (interchain with G-Cter in SUMO2) cross-link. The tract at residues 1118-1158 (FFNLRSPYNSHMGNNASRPHSANGEVYGLLGSVLTIKKESE) is repression domain 4.

As to quaternary structure, interacts with RARA and RXRB homodimers and RARA/RXRB heterodimers in the presence of ligand. Interacts with HDAC1 and HDAC3 via its N-terminal domain. Interacts with NR2C1 (sumoylated form and via the ligand-binding domain); the interaction results in promoting the repressor activity of NR2C1. Interacts with CTBP1, CTBP2, ESR1, HDAC1, HDAC2, HDAC5, HDAC6, NR2C2, NR3C1, NR3C2, YWHAH, JUN and FOS. Found in a complex with both NR3C1 and YWHAH. Interacts with ZNF366. Interacts with RORA. In terms of processing, acetylation regulates its nuclear translocation and corepressive activity. Acetylation abolishes interaction with CTBP1. Phosphorylation enhances interaction with YWHAH.

It localises to the nucleus. In terms of biological role, modulates transcriptional activation by steroid receptors such as NR3C1, NR3C2 and ESR1. Also modulates transcriptional repression by nuclear hormone receptors. Positive regulator of the circadian clock gene expression: stimulates transcription of BMAL1, CLOCK and CRY1 by acting as a coactivator for RORA and RORC. Involved in the regulation of ovarian function. Plays a role in renal development. In Homo sapiens (Human), this protein is Nuclear receptor-interacting protein 1 (NRIP1).